The chain runs to 207 residues: Claudin-11 (207 aa).

Met-1 is a topological domain (cytoplasmic). Residues 2–22 (VATCLQVVGFVTSFVGWIGII) traverse the membrane as a helical segment. At 23 to 82 (VTTSTNDWVVTCSYTIPTCRKMDELGSKGLWADCVMATGLYHCKPLVDILILPGYVQACR) the chain is on the extracellular side. A helical transmembrane segment spans residues 83–103 (ALMIAASVLGLPAILLLLTVL). Residues 104 to 122 (PCIRMGHEPGVAKYRRAQL) are Cytoplasmic-facing. The helical transmembrane segment at 123–143 (AGVLLILLALCAIVATIWFPV) threads the bilayer. Topologically, residues 144–157 (CAHREITIVSFGYS) are extracellular. The chain crosses the membrane as a helical span at residues 158–178 (LYAGWIGAVMCLVGGCVIVCC). Topologically, residues 179–207 (SGDAQSFGENRFYYSSGSSSPTHAKSAHV) are cytoplasmic. Residues Ser-193, Ser-194, Ser-197, and Ser-198 each carry the phosphoserine modification.

This sequence belongs to the claudin family. Interacts with tetraspanin-3/TSPAN3. Interacts with OCLN.

The protein localises to the cell junction. The protein resides in the tight junction. It is found in the cell membrane. Functionally, plays a major role in tight junction-specific obliteration of the intercellular space, through calcium-independent cell-adhesion activity. The polypeptide is Claudin-11 (Cldn11) (Mus musculus (Mouse)).